Reading from the N-terminus, the 418-residue chain is EPS I polysaccharide export inner membrane protein EpsF (418 aa).

Transmembrane regions (helical) follow at residues 21-41, 45-65, 142-162, 170-190, 222-242, 262-282, 296-316, 326-346, 347-367, and 377-397; these read VLVV…LPII, CAAI…LATA, PLLV…IAIY, YVVF…GSAI, AGTH…VLFL, LIVL…EFVM, SAWE…AWLL, MAFL…PAVG, ARLF…FFFA, and KTLA…IVSA.

This sequence to S.marcescens SfuB.

Its subcellular location is the cell inner membrane. Probably involved in polymerization and/or export of exopolysaccharide EPS I which functions as a virulence factor. May play a role in export of EPS I or its intermediates across the membranes. The protein is EPS I polysaccharide export inner membrane protein EpsF (epsF) of Ralstonia nicotianae (strain ATCC BAA-1114 / GMI1000) (Ralstonia solanacearum).